Consider the following 518-residue polypeptide: Probable pectinesterase/pectinesterase inhibitor 16 (518 aa).

Residues 1-33 (MASSSSISNHKIPNTLMFLVIVNFLYLIQTNSA) form the signal peptide. A pectinesterase inhibitor 16 region spans residues 30 to 172 (TNSAVSISSN…TGLLTSSLDL (143 aa)). N-linked (GlcNAc...) asparagine glycosylation is found at asparagine 82 and asparagine 161. The interval 213–502 (DAVVAPDGSG…FTVASFIDGN (290 aa)) is pectinesterase 16. Residues threonine 289 and glutamine 319 each contribute to the substrate site. Residue aspartate 342 is the Proton donor; for pectinesterase activity of the active site. Aspartate 363 acts as the Nucleophile; for pectinesterase activity in catalysis. The substrate site is built by arginine 422 and tryptophan 424.

It in the N-terminal section; belongs to the PMEI family. This sequence in the C-terminal section; belongs to the pectinesterase family. Expressed in siliques and floral stems.

Its subcellular location is the secreted. It localises to the cell wall. The enzyme catalyses [(1-&gt;4)-alpha-D-galacturonosyl methyl ester](n) + n H2O = [(1-&gt;4)-alpha-D-galacturonosyl](n) + n methanol + n H(+). It functions in the pathway glycan metabolism; pectin degradation; 2-dehydro-3-deoxy-D-gluconate from pectin: step 1/5. Functionally, acts in the modification of cell walls via demethylesterification of cell wall pectin. The protein is Probable pectinesterase/pectinesterase inhibitor 16 (PME16) of Arabidopsis thaliana (Mouse-ear cress).